The following is a 760-amino-acid chain: Catecholate siderophore receptor Fiu (760 aa).

The signal sequence occupies residues 1-31 (MENNRNFPARQFHSLTFFAGLCIGITPVAQA). The region spanning 67–175 (PVADTTRTMT…PTGSINMISK (109 aa)) is the TBDR plug domain. Positions 180 to 760 (DSGIDASASI…TFLLTANMHF (581 aa)) constitute a TBDR beta-barrel domain. The TonB C-terminal box signature appears at 743 to 760 (RYHPGEPRTFLLTANMHF).

The protein belongs to the TonB-dependent receptor family.

It is found in the cell outer membrane. Involved in the active transport across the outer membrane of iron complexed with catecholate siderophores such as dihydroxybenzoylserine and dihydroxybenzoate. It derives its energy for transport by interacting with the trans-periplasmic membrane protein TonB. Can also transport catechol-substituted cephalosporins. Receptor for microcins M, H47 and E492. The chain is Catecholate siderophore receptor Fiu (fiu) from Escherichia coli O6:H1 (strain CFT073 / ATCC 700928 / UPEC).